Consider the following 79-residue polypeptide: Calcium/calmodulin-dependent protein kinase II inhibitor 2 (79 aa).

The disordered stretch occupies residues 1–21 (MSEILPYSEDKMGRFGADPEG). An inhibitory domain region spans residues 43–69 (KRPPKLGQIGRAKRVVIEDDRIDDVLK).

Belongs to the CAMK2N family. Interacts with CAMK2A and CAMK2B in the presence of Ca(2+)/calmodulin or after autophosphorylation.

The protein resides in the nucleus. The protein localises to the cytoplasm. It is found in the cytosol. It localises to the synapse. Its function is as follows. Potent and specific cellular inhibitor of CaM-kinase II (CAMK2). Traps Ca(2+)/calmodulin on CAMK2. The chain is Calcium/calmodulin-dependent protein kinase II inhibitor 2 (CAMK2N2) from Bos taurus (Bovine).